The chain runs to 1412 residues: DNA-directed RNA polymerase subunit beta' (1412 aa).

Mg(2+)-binding residues include Asp-543, Asp-545, and Asp-547. Positions 1017, 1092, 1099, and 1102 each coordinate Zn(2+).

This sequence belongs to the RNA polymerase beta' chain family. In terms of assembly, the RNAP catalytic core consists of 2 alpha, 1 beta, 1 beta' and 1 omega subunit. When a sigma factor is associated with the core the holoenzyme is formed, which can initiate transcription. Mg(2+) serves as cofactor. The cofactor is Zn(2+).

The catalysed reaction is RNA(n) + a ribonucleoside 5'-triphosphate = RNA(n+1) + diphosphate. Its function is as follows. DNA-dependent RNA polymerase catalyzes the transcription of DNA into RNA using the four ribonucleoside triphosphates as substrates. The protein is DNA-directed RNA polymerase subunit beta' of Mesomycoplasma hyopneumoniae (strain 232) (Mycoplasma hyopneumoniae).